The chain runs to 246 residues: Dihydromethanopterin reductase (acceptor) (246 aa).

2 4Fe-4S ferredoxin-type domains span residues 150–178 (LPYA…VKRD) and 179–208 (NFVE…EGKE). [4Fe-4S] cluster is bound by residues cysteine 159, cysteine 162, cysteine 165, cysteine 169, cysteine 188, cysteine 191, cysteine 194, and cysteine 198.

Homodimer. It depends on [4Fe-4S] cluster as a cofactor.

It catalyses the reaction 5,6,7,8-tetrahydromethanopterin + A = 7,8-dihydromethanopterin + AH2. It functions in the pathway cofactor biosynthesis; 5,6,7,8-tetrahydromethanopterin biosynthesis. Functionally, involved in the biosynthesis of tetrahydromethanopterin, a coenzyme used in methanogenesis. Catalyzes the reduction of dihydromethanopterin (H(2)MPT) to tetrahydromethanopterin (H(4)MPT). Ferredoxin may serve as an electron donor. This chain is Dihydromethanopterin reductase (acceptor), found in Methanocaldococcus jannaschii (strain ATCC 43067 / DSM 2661 / JAL-1 / JCM 10045 / NBRC 100440) (Methanococcus jannaschii).